A 259-amino-acid polypeptide reads, in one-letter code: UPF0246 protein PputGB1_4560 (259 aa).

This sequence belongs to the UPF0246 family.

The protein is UPF0246 protein PputGB1_4560 of Pseudomonas putida (strain GB-1).